We begin with the raw amino-acid sequence, 334 residues long: NmrA-like family domain-containing oxidoreductase lnaB (334 aa).

NADP(+)-binding positions include 12-17 (GGTGKQ), 38-42 (RNAQS), 59-60 (DG), 80-82 (INS), lysine 138, and 162-165 (FLEN).

Belongs to the NmrA-type oxidoreductase family.

It participates in secondary metabolite biosynthesis. In terms of biological role, nmrA-like family domain-containing oxidoreductase; part of the lna gene cluster that mediates the biosynthesis of diastereomeric piperazines. Lna and lnb clusters encode sets of enzymes that produce overlapping sets of previously undescribed metabolites such as piperazinomycin-like metabolites or morpholine. The lna and lnb biosynthetic pathways appear to be part of a signaling network that controls the formation of sclerotia, a resilient overwintering structure. One primary function of the non-canonical nonribosomal peptide synthetases lnaA and lnbA consists in the reduction of L-tyrosine. The presence in the clusters of tailoring enzymes such as the oxidoreductases lnaB, lnbB, lnaE or lnbE, as well as of the cytochrome P450 monooxygenases lnaC, lnaD, or lnbC, might explain formation of various diastereomeric piperazines. The polypeptide is NmrA-like family domain-containing oxidoreductase lnaB (Aspergillus flavus (strain ATCC 200026 / FGSC A1120 / IAM 13836 / NRRL 3357 / JCM 12722 / SRRC 167)).